The primary structure comprises 114 residues: Progonadoliberin-2 (114 aa).

The first 25 residues, 1-25 (MASSMLGFLLLLLLLMAAHPGPSEA), serve as a signal peptide directing secretion. Residues 22–80 (PSEAQHWSHGWYPGGKRASNSPQDPQSALRPPAPSAAQTAHSFRSAALASPEDSVPWEG) form a disordered region. At Gly35 the chain carries Glycine amide.

Belongs to the GnRH family. As to expression, midbrain.

It is found in the secreted. Functionally, stimulates the secretion of gonadotropins; it stimulates the secretion of both luteinizing and follicle-stimulating hormones. This chain is Progonadoliberin-2 (GNRH2), found in Tupaia belangeri (Common tree shrew).